The primary structure comprises 301 residues: Probable aspartoacylase (301 aa).

Zn(2+) is bound by residues His-13 and Glu-16. Substrate-binding positions include Arg-54 and 61 to 62 (NR). His-105 contacts Zn(2+). 2 residues coordinate substrate: Glu-163 and Tyr-273.

This sequence belongs to the AspA/AstE family. Aspartoacylase subfamily. Zn(2+) is required as a cofactor.

The catalysed reaction is an N-acyl-L-aspartate + H2O = a carboxylate + L-aspartate. The polypeptide is Probable aspartoacylase (Prochlorococcus marinus (strain MIT 9215)).